Reading from the N-terminus, the 162-residue chain is Large ribosomal subunit protein uL15 (162 aa).

The segment covering 1–18 (MKLNEIRDNEGATKDRMR) has biased composition (basic and acidic residues). A disordered region spans residues 1 to 42 (MKLNEIRDNEGATKDRMRVGRGIGSGKGKTAGRGVKGQKART). A compositionally biased stretch (gly residues) spans 21-35 (RGIGSGKGKTAGRGV).

It belongs to the universal ribosomal protein uL15 family. In terms of assembly, part of the 50S ribosomal subunit.

In terms of biological role, binds to the 23S rRNA. This Methylobacterium sp. (strain 4-46) protein is Large ribosomal subunit protein uL15.